The chain runs to 623 residues: MLAWRPGRPDGCQAAGGRRYNPGHDCIKASVSLNSAARNAPAGSQPVKAELWKRVYSRVGSYWKGLVLAVLLMAGAAATQPTLAVIMKPLLDDGFSGAKPHYVWFLPLAVVGLILLRGICNFFSDYLLAWVANNVLRGIRGEMFERLLGLPDADFKRGDTGRLLNRFTIDAGNVTGYATDVITVLVRETLVVIALIGVLLYMSWALTLIILVMLPVSVGIARAFTRRLRRINRETVNMNAELTRVVSEGIDGQRVIKLFDGYDAERRRFDFVNSRLRRFAMRSATADAALTPLTQVCISVAVGAVIAVALSQANSGALTVGSFASFMAALAQIFDPIKRLTNLAGKMQKMLVAAESVFTLVDQTPEADAGTRALPEPVRGKVEFRAVSHRFPDADRDTVSAVSFLVEPGQTVALVGRSGSGKTTLVNMLPRFVLPDGGDILFDDVPIQDLTLRSLRSHLSLVSQDVVLFDDTIAANVGYGAGGTVDDARVRDALAAANLLEFVDGLPLGIHTPVGQNAARLSGGQRQRLAIARALIKNAPVLILDEATSALDNESERQVQASLERLMRGRTTLVIAHRLSTVQNADRIIVLDAGKIVEHGPHSELLAANGLYASLYNMQFRED.

A run of 5 helical transmembrane segments spans residues 66 to 86 (LVLA…LAVI), 103 to 123 (VWFL…CNFF), 190 to 210 (LVVI…TLII), 290 to 310 (LTPL…AVAL), and 317 to 337 (ALTV…FDPI). One can recognise an ABC transmembrane type-1 domain in the interval 67-349 (VLAVLLMAGA…LTNLAGKMQK (283 aa)). The ABC transporter domain maps to 382 to 618 (VEFRAVSHRF…NGLYASLYNM (237 aa)). 416–423 (GRSGSGKT) is an ATP binding site.

This sequence belongs to the ABC transporter superfamily. Lipid exporter (TC 3.A.1.106) family. In terms of assembly, homodimer.

The protein resides in the cell inner membrane. It carries out the reaction ATP + H2O + lipid A-core oligosaccharideSide 1 = ADP + phosphate + lipid A-core oligosaccharideSide 2.. Functionally, involved in lipopolysaccharide (LPS) biosynthesis. Translocates lipid A-core from the inner to the outer leaflet of the inner membrane. Transmembrane domains (TMD) form a pore in the inner membrane and the ATP-binding domain (NBD) is responsible for energy generation. This Bordetella pertussis (strain Tohama I / ATCC BAA-589 / NCTC 13251) protein is ATP-dependent lipid A-core flippase.